The primary structure comprises 101 residues: Gastrin (101 aa).

Residues M1 to A21 form the signal peptide. Residues W23–Q101 form a disordered region. The span at P25–G37 shows a compositional bias: polar residues. Sulfotyrosine is present on Y87. F92 is subject to Phenylalanine amide. Positions F92–Q101 are enriched in basic and acidic residues. S96 is subject to Phosphoserine. Residues S96–Q101 constitute a propeptide that is removed on maturation.

This sequence belongs to the gastrin/cholecystokinin family. Sulfation enhances proteolytic processing, and blocks peptide degradation. Levels of sulfation differ between proteolytically-cleaved gastrins and between tissues. Abundantly expressed in the stomach and duodenum. Low levels in brain, ovary and pancreas.

The protein resides in the secreted. Gastrin stimulates the stomach mucosa to produce and secrete hydrochloric acid and the pancreas to secrete its digestive enzymes. It also stimulates smooth muscle contraction and increases blood circulation and water secretion in the stomach and intestine. This chain is Gastrin (Gast), found in Mus musculus (Mouse).